A 959-amino-acid polypeptide reads, in one-letter code: Leucine--tRNA ligase (959 aa).

A 'HIGH' region motif is present at residues 39–49 (PYVNAYPHLGS). Residues 637-641 (KMSKS) carry the 'KMSKS' region motif. Lys640 is an ATP binding site. The segment at 933–959 (TEEDGGSPRRANALPGRPALYAEKRGG) is disordered.

It belongs to the class-I aminoacyl-tRNA synthetase family.

It localises to the cytoplasm. The enzyme catalyses tRNA(Leu) + L-leucine + ATP = L-leucyl-tRNA(Leu) + AMP + diphosphate. In Aeropyrum pernix (strain ATCC 700893 / DSM 11879 / JCM 9820 / NBRC 100138 / K1), this protein is Leucine--tRNA ligase.